Here is a 352-residue protein sequence, read N- to C-terminus: Isoflavone-7-O-methyltransferase 9 (352 aa).

Substrate is bound at residue 118 to 127 (VLDPTLSGSY). Positions 196, 219, 239, 240, and 253 each coordinate S-adenosyl-L-methionine. Histidine 257 serves as the catalytic Proton acceptor.

The protein belongs to the class I-like SAM-binding methyltransferase superfamily. Cation-independent O-methyltransferase family. COMT subfamily. As to quaternary structure, homodimer.

The catalysed reaction is a 7-hydroxyisoflavone + S-adenosyl-L-methionine = a 7-methoxyisoflavone + S-adenosyl-L-homocysteine + H(+). It participates in phytoalexin biosynthesis; medicarpin biosynthesis. Transfers a methyl group to 7-hydroxyls of the isoflavones daidzein, genistein and 6,7,4'-trihydroxyisoflavone. Can also methylate (+)6a-hydroxymaackiain with lower efficiency. This chain is Isoflavone-7-O-methyltransferase 9, found in Medicago sativa (Alfalfa).